Consider the following 571-residue polypeptide: Probable pectinesterase/pectinesterase inhibitor 58 (571 aa).

The N-terminal stretch at 1–28 (MGVDGELKKKKCIIAGVITALLVLMVVA) is a signal peptide. N36, N91, N207, and N216 each carry an N-linked (GlcNAc...) asparagine glycan. Positions 49-204 (KTATTAVEAV…RELTSNGLAM (156 aa)) are pectinesterase inhibitor 58. The pectinesterase 58 stretch occupies residues 259 to 556 (NVVVAHDGSG…FTPARFLRGN (298 aa)). T335 lines the substrate pocket. N347 carries N-linked (GlcNAc...) asparagine glycosylation. Q365 contributes to the substrate binding site. D388 acts as the Proton donor; for pectinesterase activity in catalysis. The cysteines at positions 402 and 422 are disulfide-linked. D409 serves as the catalytic Nucleophile; for pectinesterase activity. Residues R477 and W479 each contribute to the substrate site.

The protein in the N-terminal section; belongs to the PMEI family. This sequence in the C-terminal section; belongs to the pectinesterase family. Expressed in siliques, but not in flower buds.

The protein resides in the secreted. It is found in the cell wall. It catalyses the reaction [(1-&gt;4)-alpha-D-galacturonosyl methyl ester](n) + n H2O = [(1-&gt;4)-alpha-D-galacturonosyl](n) + n methanol + n H(+). The protein operates within glycan metabolism; pectin degradation; 2-dehydro-3-deoxy-D-gluconate from pectin: step 1/5. Its function is as follows. Acts in the modification of cell walls via demethylesterification of cell wall pectin. The sequence is that of Probable pectinesterase/pectinesterase inhibitor 58 (PME58) from Arabidopsis thaliana (Mouse-ear cress).